A 202-amino-acid chain; its full sequence is Orotate phosphoribosyltransferase (202 aa).

Residues Arg-94, Lys-98, His-100, and 120 to 128 (EDLISTGGS) each bind 5-phospho-alpha-D-ribose 1-diphosphate. Ser-124 contacts orotate.

This sequence belongs to the purine/pyrimidine phosphoribosyltransferase family. PyrE subfamily. As to quaternary structure, homodimer. The cofactor is Mg(2+).

It carries out the reaction orotidine 5'-phosphate + diphosphate = orotate + 5-phospho-alpha-D-ribose 1-diphosphate. It participates in pyrimidine metabolism; UMP biosynthesis via de novo pathway; UMP from orotate: step 1/2. Its function is as follows. Catalyzes the transfer of a ribosyl phosphate group from 5-phosphoribose 1-diphosphate to orotate, leading to the formation of orotidine monophosphate (OMP). This Staphylococcus haemolyticus (strain JCSC1435) protein is Orotate phosphoribosyltransferase.